The chain runs to 320 residues: MKKNLISNHIQLNDSGKLIHLLGLEGLSKQHLTHILDKADSLIDTSGNLKKSKALDDMSIANLFFEPSTRTRNTFEIAAMRSSANVINVDLANSALKKNEDLLDTMRTLKAMQIDMFVIRHKQNGLPHHVAKYLEGVSILNAGDGINAHPTQALLDMLSIRQHKKTFENLSVAIVGDIIHSRVAHSGIQALKTLGTTDIRLIAPKILQYNSEPCSEVSCFDDIEPGLKDCDVVIVLRLQKERMIEANIPNEQEYFNNFGLTPKRLALTKSDAIVMHPGPINRGVEIDSIVADGNQSIILQQVTDGIAIRMAVMQILANKS.

Residues arginine 70 and threonine 71 each contribute to the carbamoyl phosphate site. L-aspartate is bound at residue lysine 98. Residues arginine 120, histidine 149, and glutamine 152 each coordinate carbamoyl phosphate. Positions 182 and 237 each coordinate L-aspartate. Residues glycine 278 and proline 279 each coordinate carbamoyl phosphate.

It belongs to the aspartate/ornithine carbamoyltransferase superfamily. ATCase family. Heterododecamer (2C3:3R2) of six catalytic PyrB chains organized as two trimers (C3), and six regulatory PyrI chains organized as three dimers (R2).

It carries out the reaction carbamoyl phosphate + L-aspartate = N-carbamoyl-L-aspartate + phosphate + H(+). Its pathway is pyrimidine metabolism; UMP biosynthesis via de novo pathway; (S)-dihydroorotate from bicarbonate: step 2/3. Its function is as follows. Catalyzes the condensation of carbamoyl phosphate and aspartate to form carbamoyl aspartate and inorganic phosphate, the committed step in the de novo pyrimidine nucleotide biosynthesis pathway. The protein is Aspartate carbamoyltransferase catalytic subunit of Vesicomyosocius okutanii subsp. Calyptogena okutanii (strain HA).